A 265-amino-acid polypeptide reads, in one-letter code: Tryptophan synthase alpha chain (265 aa).

Residues Glu-45 and Asp-56 each act as proton acceptor in the active site.

The protein belongs to the TrpA family. Tetramer of two alpha and two beta chains.

The enzyme catalyses (1S,2R)-1-C-(indol-3-yl)glycerol 3-phosphate + L-serine = D-glyceraldehyde 3-phosphate + L-tryptophan + H2O. The protein operates within amino-acid biosynthesis; L-tryptophan biosynthesis; L-tryptophan from chorismate: step 5/5. The alpha subunit is responsible for the aldol cleavage of indoleglycerol phosphate to indole and glyceraldehyde 3-phosphate. The polypeptide is Tryptophan synthase alpha chain (Halalkalibacterium halodurans (strain ATCC BAA-125 / DSM 18197 / FERM 7344 / JCM 9153 / C-125) (Bacillus halodurans)).